Here is a 391-residue protein sequence, read N- to C-terminus: MAKEKFERSKPHVNIGTIGHVDHGKTTLTAAITKQFGDFKAYDEIDGAPEEKARGITISTAHVEYETDARHYAHVDCPGHADYVKNMITGAAQMDGAILVVNAADGPMPQTREHILLGRQVGIPYMVVFMNKVDQVDDEELLELVEMEIRELLSSYEYPGDDIPIIAGSALAALEGRDPEIGEQKIAELMKAVDDYIPTPARAVDQPFLMPIEDVFSISGRGTVVTGRVERGVINVGDEIEIVGIRDTKKTTCTGVEMFRKLLDRGEAGDNIGALLRGVDREGVERGQVLCKPGSVTPHTKFEAEAYILTKEEGGRHTPFFANYRPQFYFRTTDVTGTVTLPEGTEMVMPGDNLKFGVELIAPIAMEDGLRFAIREGGRTVGAGVVSKIIE.

A tr-type G domain is found at 10–201 (KPHVNIGTIG…AVDDYIPTPA (192 aa)). The interval 19 to 26 (GHVDHGKT) is G1. 19–26 (GHVDHGKT) contacts GTP. Threonine 26 serves as a coordination point for Mg(2+). The segment at 55 to 59 (GITIS) is G2. The interval 76–79 (DCPG) is G3. GTP contacts are provided by residues 76-80 (DCPGH) and 131-134 (NKVD). The interval 131–134 (NKVD) is G4. The segment at 169–171 (SAL) is G5.

Belongs to the TRAFAC class translation factor GTPase superfamily. Classic translation factor GTPase family. EF-Tu/EF-1A subfamily. Monomer.

The protein localises to the cytoplasm. It carries out the reaction GTP + H2O = GDP + phosphate + H(+). Its function is as follows. GTP hydrolase that promotes the GTP-dependent binding of aminoacyl-tRNA to the A-site of ribosomes during protein biosynthesis. The sequence is that of Elongation factor Tu from Dinoroseobacter shibae (strain DSM 16493 / NCIMB 14021 / DFL 12).